Consider the following 296-residue polypeptide: Protoheme IX farnesyltransferase (296 aa).

The Cytoplasmic portion of the chain corresponds to 1 to 9; sequence MMFKQYLQV. The chain crosses the membrane as a helical span at residues 10–28; that stretch reads TKPGIIFGNLISVIGGFLL. Over 29–37 the chain is Periplasmic; sequence ASKGSIDYP. A helical transmembrane segment spans residues 38–56; that stretch reads LFIYTLVGVSLVVASGCVF. Over 57–78 the chain is Cytoplasmic; that stretch reads NNYIDRDIDRKMERTKNRVLVK. The chain crosses the membrane as a helical span at residues 79-97; the sequence is GLISPAVSLVYATLLGFAG. The Periplasmic segment spans residues 98-107; the sequence is FMLLWFGANP. The chain crosses the membrane as a helical span at residues 108-126; that stretch reads LACWLGVMGFVVYVGVYSL. At 127-197 the chain is on the cytoplasmic side; it reads YMKRHSVYGT…YQAANIPVLP (71 aa). Residues 198-216 traverse the membrane as a helical segment; sequence VVKGISVAKNHITLYIIAF. The Periplasmic segment spans residues 217–228; it reads AVATLMLSLGGY. The helical transmembrane segment at 229–247 threads the bilayer; it reads AGYKYLVVAAAVSVWWLGM. The Cytoplasmic portion of the chain corresponds to 248–268; sequence ALRGYKVADDRIWARKLFGFS. The chain crosses the membrane as a helical span at residues 269-287; the sequence is IIAITALSVMMSVDFMVPD. The Periplasmic segment spans residues 288–296; sequence SHTLLAAVW.

This sequence belongs to the UbiA prenyltransferase family. Protoheme IX farnesyltransferase subfamily.

The protein localises to the cell inner membrane. The catalysed reaction is heme b + (2E,6E)-farnesyl diphosphate + H2O = Fe(II)-heme o + diphosphate. It functions in the pathway porphyrin-containing compound metabolism; heme O biosynthesis; heme O from protoheme: step 1/1. In terms of biological role, converts heme B (protoheme IX) to heme O by substitution of the vinyl group on carbon 2 of heme B porphyrin ring with a hydroxyethyl farnesyl side group. In Shigella sonnei (strain Ss046), this protein is Protoheme IX farnesyltransferase.